A 198-amino-acid polypeptide reads, in one-letter code: uncharacterized protein (198 aa).

The interval 166–198 (GYEPDEKARKKRERVKRSEVEDQLKINVKPTRR) is disordered.

This is an uncharacterized protein from Coxiella burnetii (strain RSA 493 / Nine Mile phase I).